A 465-amino-acid polypeptide reads, in one-letter code: Cysteine--tRNA ligase (465 aa).

Residue Cys29 participates in Zn(2+) binding. A 'HIGH' region motif is present at residues 31 to 41 (PTVYNYIHIGN). Cys209, His234, and Glu238 together coordinate Zn(2+). Positions 266 to 270 (KMSKS) match the 'KMSKS' region motif. ATP is bound at residue Lys269. Ser270 carries the post-translational modification Phosphoserine.

The protein belongs to the class-I aminoacyl-tRNA synthetase family. In terms of assembly, monomer. Zn(2+) is required as a cofactor.

It localises to the cytoplasm. It carries out the reaction tRNA(Cys) + L-cysteine + ATP = L-cysteinyl-tRNA(Cys) + AMP + diphosphate. The chain is Cysteine--tRNA ligase from Anoxybacillus flavithermus (strain DSM 21510 / WK1).